The sequence spans 90 residues: UPF0367 protein PMT9312_0127 (90 aa).

This sequence belongs to the UPF0367 family.

The polypeptide is UPF0367 protein PMT9312_0127 (Prochlorococcus marinus (strain MIT 9312)).